The primary structure comprises 640 residues: F-box protein MET30 (640 aa).

Residues 1-19 (MRRERQRMMSFEDKDKDDL) are compositionally biased toward basic and acidic residues. A disordered region spans residues 1-84 (MRRERQRMMS…ATNDSGTRVQ (84 aa)). Residues 1-299 (MRRERQRMMS…KGHCRIQEFK (299 aa)) form a necessary to mediate nuclear localization region. 2 stretches are compositionally biased toward polar residues: residues 45–56 (TGSSDDLAQGSS) and 64–82 (ATRSPSSSPDLATNDSGTR). Position 67 is a phosphoserine (Ser67). The segment at 180–225 (KIDFISILPQELSLKILSYLDCQSLCNATRVCRKWQKLADDDRVWY) is interaction with SKP1/CBF3D. Residues 180–277 (KIDFISILPQ…TQTTRPWKVI (98 aa)) are important for mediating homomultimerization. The region spanning 181-227 (IDFISILPQELSLKILSYLDCQSLCNATRVCRKWQKLADDDRVWYHM) is the F-box domain. Positions 277-640 (IYRERFKVES…VKMYKFDLND (364 aa)) are interaction with MET4. 8 WD repeats span residues 300–328 (GHMDGVLTLQFNYRLLFTGSYDSTIGIWD), 340–368 (GHSDGVKTLYFDDRKLITGSLDKTIRVWN), 380–408 (GHSDSVLSVDSYQKVIVSGSADKTVKVWH), 419–449 (GHTEWVNCVKLHPKSFSCFSCSDDTTIRMWD), 461–499 (GHVGQVQKIIPLTIKDVENLATDNTSDGSSPQDDPTMTD), 509–538 (NEQETVLDENIPYPTHLLSCGLDNTIKLWD), 550–578 (GHVEGVWDIAADNFRIISGSHDGSIKVWD), and 607–635 (DKVAPIACVCIGDSECFSGDEFGCVKMYK). Residues 481–495 (ATDNTSDGSSPQDDP) are compositionally biased toward polar residues. The tract at residues 481 to 516 (ATDNTSDGSSPQDDPTMTDGADESDTPSNEQETVLD) is disordered.

The protein belongs to the WD repeat MET30/SCONB/SCON-2 family. As to quaternary structure, homomultimer. Interacts with CDC53 and SKP1/CBF3D to form the E3 ubiquitin ligase complex SCF(Met30). Interacts with MET4.

It localises to the cytoplasm. The protein resides in the nucleus. It functions in the pathway protein modification; protein ubiquitination. Functionally, substrate-recognition component of the SCF(Met30) complex, an E3 ubiquitin ligase complex that mediates the ubiquitination and subsequent proteasomal degradation of target proteins. Negatively regulates sulfur amino acids biosynthesis genes expression. Controls cell cycle function (being required for the G1/S transition and M-phase but not the S-phase), sulfur metabolism, and methionine biosynthesis as part of the SCF(Met30) complex. Required for the efficient binding of CDC45 and MCM proteins to origins of replication. Required for efficient expression of G1 cyclins. The SCF(Met30) complex catalyzes ubiquitination and degradation of the Cdk-inhibitory kinase SWE1. Involved in the S-adenosylmethionine (AdoMet)-mediated inhibition of the transcription function of MET4. The SCF(Met30) complex mediates ubiquitination and subsequent degradation of MET4 and the cellular response to cadmium. The SCF(Met30) complex acts as an inhibitor of autophagy by promoting ubiquitination and degradation of ATG9 in normal conditions. This chain is F-box protein MET30, found in Saccharomyces cerevisiae (strain ATCC 204508 / S288c) (Baker's yeast).